Reading from the N-terminus, the 75-residue chain is Small ribosomal subunit protein bS18 (75 aa).

Ala2 bears the N-acetylalanine mark.

It belongs to the bacterial ribosomal protein bS18 family. As to quaternary structure, part of the 30S ribosomal subunit. Forms a tight heterodimer with protein bS6.

Its function is as follows. Binds as a heterodimer with protein bS6 to the central domain of the 16S rRNA, where it helps stabilize the platform of the 30S subunit. The polypeptide is Small ribosomal subunit protein bS18 (rpsR) (Salmonella typhimurium (strain LT2 / SGSC1412 / ATCC 700720)).